The primary structure comprises 161 residues: M-phase phosphoprotein 6 (161 aa).

Glycyl lysine isopeptide (Lys-Gly) (interchain with G-Cter in SUMO2) cross-links involve residues K37 and K86. S111 is subject to Phosphoserine. The Nuclear localization signal motif lies at 117 to 134 (RRYETLVGTIGKKFVKKR). Residues K128, K151, and K154 each participate in a glycyl lysine isopeptide (Lys-Gly) (interchain with G-Cter in SUMO2) cross-link.

The protein belongs to the MPP6 family. As to quaternary structure, associates with the RNA exosome complex, mediated by EXOSC3. Interacts with ARHGAP18. Interacts with exosome cofactors EXOSC10 and MTREX. In terms of processing, phosphorylated in M (mitotic) phase.

The protein localises to the nucleus. The protein resides in the nucleolus. It localises to the cytoplasm. In terms of biological role, RNA-binding protein that associates with the RNA exosome complex. Involved in the 3'-processing of the 7S pre-RNA to the mature 5.8S rRNA and plays a role in recruiting the RNA exosome complex to pre-rRNA; this function may include C1D. This is M-phase phosphoprotein 6 from Mus musculus (Mouse).